The sequence spans 359 residues: MDPLGPAKPQWSCRCCLTTLLFQLLVAVCFFSYLRVSRDDPTVYPNGSRFPDSTGTPARSIPLILLWTWPFNKPTALPRCSEMLPGTADCNITADRKVYPQADAVIVHHREVMYNPSAQLPRSPRRQGQRWIWFSMESPSHCWQLKAMDGYFNLTMSYRSDSDIFTPYGWLEPWSGQPAHPPLNLSAKTELVAWAVSGWGPNSARVRYYQSLQAHLKVDVYGRSHKSLPQGTMMETLSRYKFYLAFENSLHPDYITEKLWRNALEAWAVPVVLGPSRSNYERFLPPDAFIHVDDFQSPKDLARYLQELDKDHARYLSYFGWRETLRPRSFSWALAFCKACWKLQEESRYQTRSITAWFT.

The Cytoplasmic segment spans residues 1-14 (MDPLGPAKPQWSCR). Residues 15–34 (CCLTTLLFQLLVAVCFFSYL) form a helical; Signal-anchor for type II membrane protein membrane-spanning segment. Over 35 to 359 (RVSRDDPTVY…QTRSITAWFT (325 aa)) the chain is Lumenal. 4 N-linked (GlcNAc...) asparagine glycosylation sites follow: Asn-46, Asn-91, Asn-153, and Asn-184. The segment at 73–112 (KPTALPRCSEMLPGTADCNITADRKVYPQADAVIVHHREV) is determines site-specific fucosylation.

Belongs to the glycosyltransferase 10 family. In terms of assembly, homodimer and monomer. Monomer (secreted form). In terms of processing, N-glycosylated. Proteolytic cleavage releases a secreted glycoform of 43 kDa.

The protein localises to the golgi apparatus. The protein resides in the golgi stack membrane. It is found in the secreted. It carries out the reaction a beta-D-galactosyl-(1-&gt;4)-N-acetyl-beta-D-glucosaminyl derivative + GDP-beta-L-fucose = a beta-D-galactosyl-(1-&gt;4)-[alpha-L-fucosyl-(1-&gt;3)]-N-acetyl-beta-D-glucosaminyl derivative + GDP + H(+). It catalyses the reaction an N-acetyl-alpha-neuraminyl-(2-&gt;3)-beta-D-galactosyl-(1-&gt;4)-N-acetyl-beta-D-glucosaminyl derivative + GDP-beta-L-fucose = an alpha-Neu5Ac-(2-&gt;3)-beta-D-Gal-(1-&gt;4)-[alpha-L-Fuc-(1-&gt;3)]-beta-D-GlcNAc derivative + GDP + H(+). The enzyme catalyses an alpha-Neu5Ac-(2-&gt;3)-beta-D-Gal-(1-&gt;4)-beta-D-GlcNAc-(1-&gt;3)-beta-D-Gal-(1-&gt;4)-[alpha-L-Fuc-(1-&gt;3)]-beta-D-GlcNAc derivative + GDP-beta-L-fucose = an alpha-Neu5Ac-(2-&gt;3)-beta-D-Gal-(1-&gt;4)-[alpha-L-Fuc-(1-&gt;3)]-beta-D-GlcNAc-(1-&gt;3)-beta-D-Gal-(1-&gt;4)-[alpha-L-Fuc-(1-&gt;3)]-beta-D-GlcNAc derivative + GDP + H(+). The catalysed reaction is a neolactoside nLc6Cer + GDP-beta-L-fucose = beta-D-Gal-(1-&gt;4)-[alpha-L-Fuc-(1-&gt;3)]-beta-D-GlcNAc-(1-&gt;3)-beta-D-Gal-(1-&gt;4)-beta-D-GlcNAc-(1-&gt;3)-beta-D-Gal-(1-&gt;4)-beta-D-Glc-(1&lt;-&gt;1')-Cer + GDP + H(+). It carries out the reaction a neolactoside nLc6Cer + GDP-beta-L-fucose = beta-D-galactosyl-(1-&gt;4)-N-acetyl-beta-D-glucosaminyl-(1-&gt;3)-beta-D-galactosyl-(1-&gt;4)-[alpha-L-fucosyl-(1-&gt;3)]-N-acetyl-beta-D-glucosaminyl-(1-&gt;3)-beta-D-galactosyl-(1-&gt;4)-beta-D-glucosyl-(1&lt;-&gt;1')-ceramide + GDP + H(+). It catalyses the reaction a neolactoside VI(3)-alpha-NeuNAc-nLc6Cer + GDP-beta-L-fucose = a neolactoside VI(3)-alpha-NeuAc,V(3)-alphaFuc-nLc6Cer + GDP + H(+). The enzyme catalyses beta-D-galactosyl-(1-&gt;4)-N-acetyl-D-glucosamine + GDP-beta-L-fucose = beta-D-galactosyl-(1-&gt;4)-[alpha-L-fucosyl-(1-&gt;3)]-N-acetyl-D-glucosamine + GDP + H(+). The catalysed reaction is N-acetyl-alpha-neuraminosyl-(2-&gt;3)-beta-D-galactosyl-(1-&gt;4)-N-acetyl-beta-D-glucosamine + GDP-beta-L-fucose = N-acetyl-alpha-neuraminosyl-(2-&gt;3)-beta-D-galactosyl-(1-&gt;4)-[alpha-L-fucosyl-(1-&gt;3)]-N-acetyl-beta-D-glucosamine + GDP + H(+). It carries out the reaction lactose + GDP-beta-L-fucose = beta-D-galactosyl-(1-&gt;4)-[alpha-L-fucosyl-(1-&gt;3)]-D-glucose + GDP + H(+). It catalyses the reaction alpha-L-Fuc-(1-&gt;2)-beta-D-Gal-(1-&gt;4)-D-Glc + GDP-beta-L-fucose = alpha-L-Fuc-(1-&gt;2)-beta-D-Gal-(1-&gt;4)-[alpha-L-Fuc-(1-&gt;3)]-D-Glc + GDP + H(+). The enzyme catalyses a beta-D-galactosyl-(1-&gt;4)-N-acetyl-beta-D-6-sulfooxy-glucosaminyl derivative + GDP-beta-L-fucose = a beta-D-galactosyl-(1-&gt;4)-[alpha-L-fucosyl-(1-&gt;3)]-N-acetyl-beta-D-6-sulfooxy-glucosaminyl derivative + GDP + H(+). The protein operates within protein modification; protein glycosylation. Functionally, catalyzes the transfer of L-fucose, from a guanosine diphosphate-beta-L-fucose, to the N-acetyl glucosamine (GlcNAc) of a distal alpha2,3 sialylated lactosamine unit of a glycoprotein- or glycolipid-linked sialopolylactosamines chain or of a distal or internal lactosamine unit of a neutral glycoprotein- or glycolipid-linked polylactosamines chain through an alpha-1,3 glycosidic linkage and participates in surface expression of the sialyl Lewis X (sLe(x)), Lewis X (Le(x)) and non sialylated VIM2 determinants. Moreover transfers fucose to H-type 2 (Fucalpha1-2Galbeta1-4GlcNAc) chain acceptor substrates and participates in difucosylated sialyl Lewis x determinants. Also fucosylates a polylactosamine substrate having a 6 sulfate modification at the GlcNAc moiety and gives rise to sialyl and non-sialyl 6-sulfo lewis X. Does not have activity towards type 1 ((Galbeta1-3GlcNAc)) and H-type 1 chain (Fucalpha1-2Galbeta1-3GlcNAc) acceptors substrates. The protein is 4-galactosyl-N-acetylglucosaminide 3-alpha-L-fucosyltransferase FUT6 of Gorilla gorilla gorilla (Western lowland gorilla).